The primary structure comprises 1577 residues: Pentafunctional AROM polypeptide (1577 aa).

The tract at residues 1-392 (MASVGLEKVN…YGTSAHVVSD (392 aa)) is 3-dehydroquinate synthase. NAD(+)-binding positions include 80-83 (ETYK), 111-113 (GGV), and Asp-116. 7-phospho-2-dehydro-3-deoxy-D-arabino-heptonate is bound at residue Arg-127. 136-137 (TS) lines the NAD(+) pocket. 7-phospho-2-dehydro-3-deoxy-D-arabino-heptonate is bound by residues Asp-143 and Lys-149. NAD(+) is bound at residue Lys-158. A 7-phospho-2-dehydro-3-deoxy-D-arabino-heptonate-binding site is contributed by Asn-159. Residues 176 to 179 (WLET) and Asn-187 contribute to the NAD(+) site. Position 191 (Glu-191) interacts with Zn(2+). Residues 191–194 (EVIK) and Lys-258 contribute to the 7-phospho-2-dehydro-3-deoxy-D-arabino-heptonate site. Catalysis depends on Glu-268, which acts as the Proton acceptor; for 3-dehydroquinate synthase activity. Residues 272-276 (RNLLN) and His-279 each bind 7-phospho-2-dehydro-3-deoxy-D-arabino-heptonate. His-279 serves as a coordination point for Zn(2+). The active-site Proton acceptor; for 3-dehydroquinate synthase activity is His-283. The 7-phospho-2-dehydro-3-deoxy-D-arabino-heptonate site is built by His-295 and Lys-364. Position 295 (His-295) interacts with Zn(2+). Residues 405–863 (VYPFTDVRSS…WDVLHSRLGA (459 aa)) are EPSP synthase. Residue Cys-845 is the For EPSP synthase activity of the active site. The shikimate kinase stretch occupies residues 882 to 1071 (VVLIGMRAAG…VPVKRSTFVC (190 aa)). 886-893 (GMRAAGKS) lines the ATP pocket. The interval 1072–1284 (LTFQNLLPEM…AAPGQLTLRQ (213 aa)) is 3-dehydroquinase. The active-site Proton acceptor; for 3-dehydroquinate dehydratase activity is His-1189. Lys-1218 functions as the Schiff-base intermediate with substrate; for 3-dehydroquinate dehydratase activity in the catalytic mechanism. Positions 1297-1577 (PKKMFVVGSP…APVYDAVTQE (281 aa)) are shikimate dehydrogenase.

This sequence in the N-terminal section; belongs to the sugar phosphate cyclases superfamily. Dehydroquinate synthase family. It in the 2nd section; belongs to the EPSP synthase family. The protein in the 3rd section; belongs to the shikimate kinase family. In the 4th section; belongs to the type-I 3-dehydroquinase family. This sequence in the C-terminal section; belongs to the shikimate dehydrogenase family. As to quaternary structure, homodimer. Requires Zn(2+) as cofactor.

It localises to the cytoplasm. The catalysed reaction is 7-phospho-2-dehydro-3-deoxy-D-arabino-heptonate = 3-dehydroquinate + phosphate. It carries out the reaction 3-dehydroquinate = 3-dehydroshikimate + H2O. The enzyme catalyses shikimate + NADP(+) = 3-dehydroshikimate + NADPH + H(+). It catalyses the reaction shikimate + ATP = 3-phosphoshikimate + ADP + H(+). The catalysed reaction is 3-phosphoshikimate + phosphoenolpyruvate = 5-O-(1-carboxyvinyl)-3-phosphoshikimate + phosphate. The protein operates within metabolic intermediate biosynthesis; chorismate biosynthesis; chorismate from D-erythrose 4-phosphate and phosphoenolpyruvate: step 2/7. Its pathway is metabolic intermediate biosynthesis; chorismate biosynthesis; chorismate from D-erythrose 4-phosphate and phosphoenolpyruvate: step 3/7. It participates in metabolic intermediate biosynthesis; chorismate biosynthesis; chorismate from D-erythrose 4-phosphate and phosphoenolpyruvate: step 4/7. It functions in the pathway metabolic intermediate biosynthesis; chorismate biosynthesis; chorismate from D-erythrose 4-phosphate and phosphoenolpyruvate: step 5/7. The protein operates within metabolic intermediate biosynthesis; chorismate biosynthesis; chorismate from D-erythrose 4-phosphate and phosphoenolpyruvate: step 6/7. Its function is as follows. The AROM polypeptide catalyzes 5 consecutive enzymatic reactions in prechorismate polyaromatic amino acid biosynthesis. The chain is Pentafunctional AROM polypeptide from Eremothecium gossypii (strain ATCC 10895 / CBS 109.51 / FGSC 9923 / NRRL Y-1056) (Yeast).